The primary structure comprises 422 residues: UDP-N-acetylglucosamine 1-carboxyvinyltransferase (422 aa).

22–23 (KN) is a phosphoenolpyruvate binding site. UDP-N-acetyl-alpha-D-glucosamine is bound at residue Arg-95. The active-site Proton donor is Cys-119. Cys-119 carries the post-translational modification 2-(S-cysteinyl)pyruvic acid O-phosphothioketal. Residues 124–128 (RPIDQ), Asp-309, and Val-331 each bind UDP-N-acetyl-alpha-D-glucosamine.

This sequence belongs to the EPSP synthase family. MurA subfamily.

It is found in the cytoplasm. The catalysed reaction is phosphoenolpyruvate + UDP-N-acetyl-alpha-D-glucosamine = UDP-N-acetyl-3-O-(1-carboxyvinyl)-alpha-D-glucosamine + phosphate. The protein operates within cell wall biogenesis; peptidoglycan biosynthesis. Functionally, cell wall formation. Adds enolpyruvyl to UDP-N-acetylglucosamine. The sequence is that of UDP-N-acetylglucosamine 1-carboxyvinyltransferase from Anaeromyxobacter sp. (strain Fw109-5).